Reading from the N-terminus, the 710-residue chain is Choline transporter-like protein 4 (710 aa).

The Cytoplasmic portion of the chain corresponds to 1-34 (MGGKQRDEDDEAYGKPVKYDPSFRGPIKNRSCTD). Residues 35 to 55 (VICCVLFLLFILGYIVVGIVA) form a helical membrane-spanning segment. At 56-229 (WLYGDPRQVL…KIFEDFAQSW (174 aa)) the chain is on the extracellular side. Residues Asn69, Asn155, and Asn197 are each glycosylated (N-linked (GlcNAc...) asparagine). The helical transmembrane segment at 230-250 (YWILVALGVALVLSLLFILLL) threads the bilayer. Residues 251-252 (RL) lie on the Cytoplasmic side of the membrane. Residues 253 to 273 (VAGPLVLVLILGVLGVLAYGI) form a helical membrane-spanning segment. Residues 274–309 (YYCWEEYRVLRDKGASISQLGFTTNLSAYQSVQETW) lie on the Extracellular side of the membrane. Residue Asn298 is glycosylated (N-linked (GlcNAc...) asparagine). Residues 310–330 (LAALIVLAVLEAILLLMLIFL) traverse the membrane as a helical segment. At 331 to 358 (RQRIRIAIALLKEASKAVGQMMSTMFYP) the chain is on the cytoplasmic side. The helical transmembrane segment at 359 to 379 (LVTFVLLLICIAYWAMTALYL) threads the bilayer. Over 380 to 455 (ATSGQPQYVL…GVLGLFWTLN (76 aa)) the chain is Extracellular. N-linked (GlcNAc...) asparagine glycosylation is found at Asn393, Asn405, and Asn416. A helical transmembrane segment spans residues 456–476 (WVLALGQCVLAGAFASFYWAF). Topologically, residues 477–501 (HKPQDIPTFPLISAFIRTLRYHTGS) are cytoplasmic. Residues 502–522 (LAFGALILTLVQIARVILEYI) traverse the membrane as a helical segment. Over 523–560 (DHKLRGVQNPVARCIMCCFKCCLWCLEKFIKFLNRNAY) the chain is Extracellular. Residues 561-581 (IMIAIYGKNFCVSAKNAFMLL) form a helical membrane-spanning segment. Over 582–597 (MRNIVRVVVLDKVTDL) the chain is Cytoplasmic. Residues 598 to 618 (LLFFGKLLVVGGVGVLSFFFF) form a helical membrane-spanning segment. Residues 619 to 638 (SGRIPGLGKDFKSPHLNYYW) lie on the Extracellular side of the membrane. Residues 639 to 659 (LPIMTSILGAYVIASGFFSVF) form a helical membrane-spanning segment. The Cytoplasmic segment spans residues 660–710 (GMCVDTLFLCFLEDLERNNGSLDRPYYMSKSLLKILGKKNEAPPDNKKRKK).

This sequence belongs to the CTL (choline transporter-like) family. N-glycosylated; N-glycosylation of Asn-69, Asn-155 and Asn-393 is required for a proper thiamine pyrophosphate uptake. In terms of tissue distribution, highly expressed in colon, also detected in prostate, trachea and lung. Isoform 3 is also expressed in colon but a lower levels. As to expression, expressed in colon at low levels.

The protein localises to the membrane. It is found in the apical cell membrane. The enzyme catalyses choline(out) + n H(+)(in) = choline(in) + n H(+)(out). The catalysed reaction is thiamine diphosphate(out) = thiamine diphosphate(in). Choline transporter that plays a role in the choline-acetylcholine system and is required to the efferent innervation of hair cells in the olivocochlear bundle for the maintenance of physiological function of outer hair cells and the protection of hair cells from acoustic injury. Also described as a thiamine pyrophosphate transporter in colon, may mediate the absorption of microbiota-generated thiamine pyrophosphate and contribute to host thiamine (vitamin B1) homeostasis. Functionally, also has thiamine pyrophosphate transporter activity. The protein is Choline transporter-like protein 4 of Homo sapiens (Human).